Reading from the N-terminus, the 187-residue chain is Putative manganese efflux pump MntP (187 aa).

6 helical membrane passes run phenylalanine 8 to isoleucine 28, isoleucine 39 to leucine 59, leucine 65 to isoleucine 85, leucine 106 to valine 126, isoleucine 131 to phenylalanine 151, and isoleucine 166 to isoleucine 186.

The protein belongs to the MntP (TC 9.B.29) family.

It is found in the cell inner membrane. In terms of biological role, probably functions as a manganese efflux pump. The chain is Putative manganese efflux pump MntP from Rippkaea orientalis (strain PCC 8801 / RF-1) (Cyanothece sp. (strain PCC 8801)).